We begin with the raw amino-acid sequence, 431 residues long: Enolase (431 aa).

Glutamine 163 contacts (2R)-2-phosphoglycerate. Glutamate 205 functions as the Proton donor in the catalytic mechanism. Mg(2+)-binding residues include aspartate 242, glutamate 288, and aspartate 315. (2R)-2-phosphoglycerate-binding residues include lysine 340, arginine 369, serine 370, and lysine 391. Lysine 340 functions as the Proton acceptor in the catalytic mechanism.

This sequence belongs to the enolase family. Mg(2+) is required as a cofactor.

The protein resides in the cytoplasm. Its subcellular location is the secreted. It is found in the cell surface. It carries out the reaction (2R)-2-phosphoglycerate = phosphoenolpyruvate + H2O. The protein operates within carbohydrate degradation; glycolysis; pyruvate from D-glyceraldehyde 3-phosphate: step 4/5. Functionally, catalyzes the reversible conversion of 2-phosphoglycerate (2-PG) into phosphoenolpyruvate (PEP). It is essential for the degradation of carbohydrates via glycolysis. This chain is Enolase, found in Bacillus cereus (strain G9842).